The primary structure comprises 139 residues: D-ribose pyranase (139 aa).

Residue His20 is the Proton donor of the active site. Residues Asp28, His106, and 128–130 (YAN) each bind substrate.

The protein belongs to the RbsD / FucU family. RbsD subfamily. Homodecamer.

The protein resides in the cytoplasm. The catalysed reaction is beta-D-ribopyranose = beta-D-ribofuranose. Its pathway is carbohydrate metabolism; D-ribose degradation; D-ribose 5-phosphate from beta-D-ribopyranose: step 1/2. In terms of biological role, catalyzes the interconversion of beta-pyran and beta-furan forms of D-ribose. This is D-ribose pyranase from Edwardsiella ictaluri (strain 93-146).